The primary structure comprises 268 residues: Type III pantothenate kinase (268 aa).

Position 6–13 (6–13 (DVGNTNIV)) interacts with ATP. Residues tyrosine 100 and 107 to 110 (GADR) each bind substrate. The active-site Proton acceptor is aspartate 109. A K(+)-binding site is contributed by aspartate 129. Residue threonine 132 coordinates ATP. A substrate-binding site is contributed by threonine 184.

The protein belongs to the type III pantothenate kinase family. As to quaternary structure, homodimer. It depends on NH4(+) as a cofactor. K(+) is required as a cofactor.

It localises to the cytoplasm. It carries out the reaction (R)-pantothenate + ATP = (R)-4'-phosphopantothenate + ADP + H(+). It participates in cofactor biosynthesis; coenzyme A biosynthesis; CoA from (R)-pantothenate: step 1/5. In terms of biological role, catalyzes the phosphorylation of pantothenate (Pan), the first step in CoA biosynthesis. The polypeptide is Type III pantothenate kinase (Alkaliphilus metalliredigens (strain QYMF)).